A 170-amino-acid polypeptide reads, in one-letter code: Adenine phosphoribosyltransferase (170 aa).

The protein belongs to the purine/pyrimidine phosphoribosyltransferase family. Homodimer.

It is found in the cytoplasm. The enzyme catalyses AMP + diphosphate = 5-phospho-alpha-D-ribose 1-diphosphate + adenine. It participates in purine metabolism; AMP biosynthesis via salvage pathway; AMP from adenine: step 1/1. Functionally, catalyzes a salvage reaction resulting in the formation of AMP, that is energically less costly than de novo synthesis. The sequence is that of Adenine phosphoribosyltransferase from Fusobacterium nucleatum subsp. nucleatum (strain ATCC 25586 / DSM 15643 / BCRC 10681 / CIP 101130 / JCM 8532 / KCTC 2640 / LMG 13131 / VPI 4355).